The chain runs to 184 residues: MKILMVTGYKPMELNIFKEDDSRIQFIKASIEKRVREFLEEGLEWVIISGQMGVELWAADVVMELKEEYPVQLGVFPPFENQDGRWPDALKEKYEELTMTADFFKPIYKGDYQGPYQFRTKDMWLIDKSDACLLLMDEEFPGSTKYFYDTLQKTAKDYPVFTITPQDIDDVVEDLRMQDPHYWD.

Belongs to the UPF0398 family.

The chain is UPF0398 protein OB1025 from Oceanobacillus iheyensis (strain DSM 14371 / CIP 107618 / JCM 11309 / KCTC 3954 / HTE831).